We begin with the raw amino-acid sequence, 623 residues long: Chaperone protein HtpG (623 aa).

Residues 1–326 are a; substrate-binding; sequence MAEEKRQFQA…SQDLPLNVSR (326 aa). The segment at 327–543 is b; the sequence is EMLQHNPVLS…EGEMSMHLEK (217 aa). A c region spans residues 544 to 623; it reads MLRAHNQAPG…VSVMEKGLLG (80 aa).

It belongs to the heat shock protein 90 family. As to quaternary structure, homodimer.

The protein localises to the cytoplasm. Functionally, molecular chaperone. Has ATPase activity. The protein is Chaperone protein HtpG of Paramagnetospirillum magneticum (strain ATCC 700264 / AMB-1) (Magnetospirillum magneticum).